A 347-amino-acid chain; its full sequence is UDP-N-acetylenolpyruvoylglucosamine reductase (347 aa).

The 173-residue stretch at 15–187 (FGIEQTCSYL…TAIGLKLPKR (173 aa)) folds into the FAD-binding PCMH-type domain. Residue Arg163 is part of the active site. Ser233 (proton donor) is an active-site residue. Glu328 is a catalytic residue.

It belongs to the MurB family. FAD is required as a cofactor.

It localises to the cytoplasm. The enzyme catalyses UDP-N-acetyl-alpha-D-muramate + NADP(+) = UDP-N-acetyl-3-O-(1-carboxyvinyl)-alpha-D-glucosamine + NADPH + H(+). It participates in cell wall biogenesis; peptidoglycan biosynthesis. In terms of biological role, cell wall formation. The sequence is that of UDP-N-acetylenolpyruvoylglucosamine reductase from Vibrio parahaemolyticus serotype O3:K6 (strain RIMD 2210633).